Here is a 137-residue protein sequence, read N- to C-terminus: Large ribosomal subunit protein uL16 (137 aa).

It belongs to the universal ribosomal protein uL16 family. Part of the 50S ribosomal subunit.

Binds 23S rRNA and is also seen to make contacts with the A and possibly P site tRNAs. The polypeptide is Large ribosomal subunit protein uL16 (Xanthobacter autotrophicus (strain ATCC BAA-1158 / Py2)).